The following is a 161-amino-acid chain: Pleiotrophin-B (161 aa).

The N-terminal stretch at 1-23 (MHHQHGLFMLALLAFLLVMTVLG) is a signal peptide. 5 disulfide bridges follow: Cys-41–Cys-70, Cys-49–Cys-79, Cys-56–Cys-83, Cys-93–Cys-125, and Cys-103–Cys-135. Chondroitin sulfate binding stretches follow at residues 86 to 93 (KKQFGAEC) and 117 to 125 (KRALHNAEC). Residues 136–161 (GKVTKPKLQESKKKKKEGKNKEKLLD) form a disordered region. A chondroitin sulfate A binding region spans residues 141–161 (PKLQESKKKKKEGKNKEKLLD).

Belongs to the pleiotrophin family. As to expression, expressed in high levels in brain and eye. Lower levels in bone. In the tailbud embryo stage, it is expressed exclusively in the central nervous system, especially in the hind region of the brain.

The protein resides in the secreted. In terms of biological role, secreted growth factor that mediates its signal through cell-surface proteoglycan and non-proteoglycan receptors. Binds cell-surface proteoglycan receptor via their chondroitin sulfate (CS) groups. Thereby regulates many processes like cell proliferation, cell survival, cell growth, cell differentiation and cell migration. Has antibacterial activity against both Gram-positive and Gram-negative bacteria. In Xenopus laevis (African clawed frog), this protein is Pleiotrophin-B (ptn-b).